Consider the following 397-residue polypeptide: Presenilin-like protein At2g29900 (397 aa).

The Cytoplasmic portion of the chain corresponds to 1-17 (MDRNQRPRSILDSLGEE). A helical transmembrane segment spans residues 18–38 (LIAILTPVSICMFTVVLLVCI). The Lumenal portion of the chain corresponds to 39–76 (LNSDPSSSSASFSSIATAAYSESDSDSSWDKFVGALLN). The helical transmembrane segment at 77 to 97 (SVVFVAAITVATFVLVLLFYL) threads the bilayer. The Cytoplasmic portion of the chain corresponds to 98 to 106 (RCVKFLKFY). Residues 107 to 127 (MGFSAFIVLGNLGGEILVLLI) form a helical membrane-spanning segment. Over 128-135 (DRFRFPID) the chain is Lumenal. Residues 136-156 (SITFLILLFNFSVVGVFAVFM) traverse the membrane as a helical segment. The Cytoplasmic portion of the chain corresponds to 157-158 (SK). The chain crosses the membrane as a helical span at residues 159–179 (FSILITQGYLVWIGVLVAYFF). Residues 180-188 (TLLPEWTTW) lie on the Lumenal side of the membrane. A helical membrane pass occupies residues 189–209 (VLLVALALYDIAAVLLPVGPL). Residue aspartate 198 is part of the active site. Residues 210–305 (RLLVEMAISR…NSETFLEGIG (96 aa)) are Cytoplasmic-facing. A helical membrane pass occupies residues 306–326 (LGSSGAIKLGLGDFIFYSVLV). The active site involves aspartate 318. The Lumenal segment spans residues 327 to 336 (GRAAMYDLMT). A helical transmembrane segment spans residues 337–357 (VYACYLAIIAGLGITLMLLSV). Residues 358 to 366 (YQKALPALP) are Cytoplasmic-facing. Residues 363 to 365 (PAL) carry the PAL motif. The helical intramembrane region spans 367-387 (VSIMLGVVFYFLARLLLEVFV). The Cytoplasmic segment spans residues 388–397 (VQCSSNLVMF).

It belongs to the peptidase A22A family. As to quaternary structure, homodimer. Probable component of the gamma-secretase complex, a complex composed of a presenilin homodimer, nicastrin, APH1 and PEN2.

It localises to the endoplasmic reticulum membrane. It is found in the golgi apparatus membrane. Probable subunit of the gamma-secretase complex, an endoprotease complex that catalyzes the intramembrane cleavage of integral membrane proteins such as Notch receptors. The sequence is that of Presenilin-like protein At2g29900 from Arabidopsis thaliana (Mouse-ear cress).